We begin with the raw amino-acid sequence, 520 residues long: MFCTRGLVFFAFPAGLDIEFTGLRSNLSGPQQISLFDLPSEWYLKTRQSVQQFTICQIGLSVFSAIEGEANKYTAHSCNFYLFPTTFGILDSEFSFQASSVQFLNQYGFNYNKFLKNGIPYMNEEQEKKIRHDILTGNWRVRSSPDKDQIKVVIDEVTRWLDLAKEGDWMTLPGITGFQAFEVQLVLRQALPNIWTVLKDEGVVVKKVSKQHRWYLQNTSCDRESCWKENILLSARGFSAFFQMLVKAQKPLVGHNMMMDLLHLHEKFFRPLPESYDQFKQNIHSLFPVLIDTKSVTKDIWKEMNFPRVSNLSKVYEVLNSDLNPTKNSGPEIVHASRCEKYVETKCPHEAAYDAFLCGSVLLKVAHLLLQKVHRIDPVPESSFPQYLDVLAPYVNQVNLIRAGVPKINFSGPDYPGIRPPILILSVKRWPGVSEQQVCHKFQNLCKFDVRRLTRSQFLLLTNKFKDARNILKEYRGHPTLCISLYRYWRHSPNVNCLLQVCGIVTAWALLAFTLGRSGP.

Positions 17, 19, 260, and 354 each coordinate Mg(2+). Residues 497-513 (CLLQVCGIVTAWALLAF) traverse the membrane as a helical segment.

The protein belongs to the CAF1 family. Requires Mg(2+) as cofactor.

The protein resides in the endoplasmic reticulum membrane. It carries out the reaction Exonucleolytic cleavage of poly(A) to 5'-AMP.. 3'-exoribonuclease that has a preference for poly(A) tails of mRNAs, thereby efficiently degrading poly(A) tails. Exonucleolytic degradation of the poly(A) tail is often the first step in the decay of eukaryotic mRNAs and is also used to silence certain maternal mRNAs translationally during oocyte maturation and early embryonic development. May act as a regulator of multipotency in embryonic stem cells. Is a critical factor for proper spermatogenesis, involved in pre-piRNAs processing to generate mature piRNAs. This chain is Poly(A)-specific ribonuclease PNLDC1, found in Pongo abelii (Sumatran orangutan).